Consider the following 688-residue polypeptide: Elongation factor G (688 aa).

The 275-residue stretch at Glu-8–Leu-282 folds into the tr-type G domain. GTP is bound by residues Ala-17–Thr-24, Asp-81–His-85, and Asn-135–Asp-138.

It belongs to the TRAFAC class translation factor GTPase superfamily. Classic translation factor GTPase family. EF-G/EF-2 subfamily.

Its subcellular location is the cytoplasm. Functionally, catalyzes the GTP-dependent ribosomal translocation step during translation elongation. During this step, the ribosome changes from the pre-translocational (PRE) to the post-translocational (POST) state as the newly formed A-site-bound peptidyl-tRNA and P-site-bound deacylated tRNA move to the P and E sites, respectively. Catalyzes the coordinated movement of the two tRNA molecules, the mRNA and conformational changes in the ribosome. This Clostridium perfringens (strain 13 / Type A) protein is Elongation factor G.